A 303-amino-acid polypeptide reads, in one-letter code: N-acetyl-D-glucosamine kinase (303 aa).

ATP contacts are provided by residues 4–11 (GFDIGGTK) and 133–140 (GVGGGLVL). Residues His-157, Cys-177, Cys-179, and Cys-184 each coordinate Zn(2+).

It belongs to the ROK (NagC/XylR) family. NagK subfamily.

It carries out the reaction N-acetyl-D-glucosamine + ATP = N-acetyl-D-glucosamine 6-phosphate + ADP + H(+). Its pathway is cell wall biogenesis; peptidoglycan recycling. Its function is as follows. Catalyzes the phosphorylation of N-acetyl-D-glucosamine (GlcNAc) derived from cell-wall degradation, yielding GlcNAc-6-P. This Salmonella arizonae (strain ATCC BAA-731 / CDC346-86 / RSK2980) protein is N-acetyl-D-glucosamine kinase.